Consider the following 347-residue polypeptide: Protein RecA (347 aa).

ATP is bound at residue 64–71 (GPESSGKT).

It belongs to the RecA family.

Its subcellular location is the cytoplasm. In terms of biological role, can catalyze the hydrolysis of ATP in the presence of single-stranded DNA, the ATP-dependent uptake of single-stranded DNA by duplex DNA, and the ATP-dependent hybridization of homologous single-stranded DNAs. It interacts with LexA causing its activation and leading to its autocatalytic cleavage. The sequence is that of Protein RecA from Bartonella quintana (strain Toulouse) (Rochalimaea quintana).